The chain runs to 172 residues: uncharacterized protein (172 aa).

Transmembrane regions (helical) follow at residues 7–27 (ILISYVGLIKLALAGILCYGI), 59–79 (LMIFLAFGFPIFFIGSFLYLF), and 89–109 (FSLTFAITFFVLFIFGLLFVK).

To M.jannaschii MJ0695.

The protein resides in the cell membrane. This is an uncharacterized protein from Methanocaldococcus jannaschii (strain ATCC 43067 / DSM 2661 / JAL-1 / JCM 10045 / NBRC 100440) (Methanococcus jannaschii).